The primary structure comprises 475 residues: Sulfate adenylyltransferase subunit 1 (475 aa).

The 215-residue stretch at 25 to 239 (KSLLRFLTCG…EVLETVEIQR (215 aa)) folds into the tr-type G domain. Residues 34 to 41 (GSVDDGKS) form a G1 region. 34–41 (GSVDDGKS) is a binding site for GTP. The segment at 92–96 (GITID) is G2. A G3 region spans residues 113-116 (DTPG). GTP contacts are provided by residues 113-117 (DTPGH) and 168-171 (NKMD). The segment at 168–171 (NKMD) is G4. The interval 206–208 (SAL) is G5.

It belongs to the TRAFAC class translation factor GTPase superfamily. Classic translation factor GTPase family. CysN/NodQ subfamily. Heterodimer composed of CysD, the smaller subunit, and CysN.

It carries out the reaction sulfate + ATP + H(+) = adenosine 5'-phosphosulfate + diphosphate. Its pathway is sulfur metabolism; hydrogen sulfide biosynthesis; sulfite from sulfate: step 1/3. Functionally, with CysD forms the ATP sulfurylase (ATPS) that catalyzes the adenylation of sulfate producing adenosine 5'-phosphosulfate (APS) and diphosphate, the first enzymatic step in sulfur assimilation pathway. APS synthesis involves the formation of a high-energy phosphoric-sulfuric acid anhydride bond driven by GTP hydrolysis by CysN coupled to ATP hydrolysis by CysD. The polypeptide is Sulfate adenylyltransferase subunit 1 (Shigella flexneri serotype 5b (strain 8401)).